The sequence spans 309 residues: MGAQFSKTAAKGEATAERPGEAAVASSPSKANGQENGHVKVNGDASPAAAEPGAKEELQANGSAPAADKEEPASGSAATPAAAEKDEAAAATEPGAGAADKEAAEAEPAEPSSPAAEAEGASASSTSSPKAEDGAAPSPSSETPKKKKKRFSFKKSFKLSGFSFKKSKKESGEGAEAEGATAEGAKDEAAAAAGGEGAAAPGEQAGGAGAEGAAGGEPREAEAAEPEQPEQPEQPAAEEPQAEEQSEAAGEKAEEPAPGATAGDASSAAGPEQEAPAATDEAAASAAPAASPEPQPECSPEAPPAPTAE.

A disordered region spans residues 1–309; sequence MGAQFSKTAA…PEAPPAPTAE (309 aa). Gly2 carries N-myristoyl glycine lipidation. Thr15 bears the Phosphothreonine mark. Residues Ser26, Ser27, Ser29, Ser46, Ser63, and Ser74 each carry the phosphoserine modification. A compositionally biased stretch (polar residues) spans 26-35; sequence SSPSKANGQE. 3 stretches are compositionally biased toward low complexity: residues 73–82, 89–98, and 109–142; these read ASGSAATPAA, AAATEPGAGA, and AEPSSPAAEAEGASASSTSSPKAEDGAAPSPSSE. Thr79 is subject to Phosphothreonine. Position 113 is a phosphoserine; by MAPK (Ser113). Phosphoserine is present on residues Ser122, Ser128, Ser138, Ser140, and Ser141. Thr143 is subject to Phosphothreonine. Residues 145–157 show a composition bias toward basic residues; sequence KKKKKRFSFKKSF. The interval 145–169 is calmodulin-binding (PSD); that stretch reads KKKKKRFSFKKSFKLSGFSFKKSKK. Residues Ser152 and Ser156 each carry the phosphoserine; by PKC modification. Residue Ser160 is modified to Phosphoserine. Ser163 carries the post-translational modification Phosphoserine; by PKC. Residue Lys165 is modified to N6-acetyllysine. Ser171 bears the Phosphoserine mark. Residues 190-203 show a composition bias toward low complexity; sequence AAAAGGEGAAAPGE. The span at 204-215 shows a compositional bias: gly residues; sequence QAGGAGAEGAAG. Ser246 bears the Phosphoserine mark. Positions 256–290 are enriched in low complexity; sequence PAPGATAGDASSAAGPEQEAPAATDEAAASAAPAA. The residue at position 291 (Ser291) is a Phosphoserine. Residues 291–309 are compositionally biased toward pro residues; it reads SPEPQPECSPEAPPAPTAE.

The protein belongs to the MARCKS family. Interacts with CDC42. Interacts with GTP-bound form of RAB10. Interacts with calmodulin/CALM1. Acetylated at Lys-165 by KAT5; acetylation is required for its subsequent phosphorylation. Deacetylated by SIRT2. In terms of processing, phosphorylation by PKC displaces MARCKS from the membrane. It also inhibits the F-actin cross-linking activity. PKC-mediated phosphorylation increases 4 to 5-fold upon TNF-alpha or LPS induction. Post-translationally, myristoylated. A proper myristoylation is essential for the proper distribution to the plasma membrane. Phosphorylation by PKC displaces MARCKS from the membrane. It also inhibits the F-actin cross-linking activity. In terms of tissue distribution, brain, spleen, less in kidney and heart, and very low levels in liver.

It is found in the cell membrane. The protein localises to the cytoplasm. Its subcellular location is the cytoskeleton. Membrane-associated protein that plays a role in the structural modulation of the actin cytoskeleton, chemotaxis, motility, cell adhesion, phagocytosis, and exocytosis through lipid sequestering and/or protein docking to membranes. Thus, exerts an influence on a plethora of physiological processes, such as embryonic development, tissue regeneration, neuronal plasticity, and inflammation. Sequesters phosphatidylinositol 4,5-bisphosphate (PIP2) at lipid rafts in the plasma membrane of quiescent cells, an action reversed by protein kinase C, ultimately inhibiting exocytosis. During inflammation, promotes the migration of inflammatory cells and the secretion of cytokines such as tumor necrosis factor (TNF), particularly in macrophages. Plays an essential role in bacteria-induced intracellular reactive oxygen species (ROS) formation in the monocytic cell type. Participates in the regulation of neurite initiation and outgrowth by interacting with components of cellular machinery including CDC42 that regulates cell shape and process extension through modulation of the cytoskeleton. Also plays a role in axon development by mediating docking and fusion of RAB10-positive vesicles with the plasma membrane. This Mus musculus (Mouse) protein is Myristoylated alanine-rich C-kinase substrate (Marcks).